We begin with the raw amino-acid sequence, 4042 residues long: Polyketide synthase-nonribosomal peptide synthetase ffsA (4042 aa).

Residues 17–453 form the Ketosynthase family 3 (KS3) domain; the sequence is REPIAIVGSA…GANAHAILEA (437 aa). Catalysis depends on for beta-ketoacyl synthase activity residues Cys-190, His-330, and His-373. Residues 561-878 form a malonyl-CoA:ACP transacylase (MAT) domain region; sequence VFTGQGAQWK…TGLLSRGRPD (318 aa). Residues 950–1083 are N-terminal hotdog fold; it reads HEILGTKCPD…GKLKVTLGEP (134 aa). Residues 950-1249 are dehydratase (DH) domain; sequence HEILGTKCPD…LQTKPLANAT (300 aa). A PKS/mFAS DH domain is found at 950–1251; that stretch reads HEILGTKCPD…TKPLANATAA (302 aa). The active-site Proton acceptor; for dehydratase activity is His-982. A C-terminal hotdog fold region spans residues 1098–1251; it reads MIDVDSERFY…TKPLANATAA (154 aa). Asp-1158 functions as the Proton donor; for dehydratase activity in the catalytic mechanism. The tract at residues 1390-1613 is methyltransferase (MT) domain; the sequence is DNLLNDFYVH…VDDHVNFLRD (224 aa). The segment at 2116-2289 is ketoreductase (KR)domain; the sequence is TYWLVGLSGG…AGSAINIGTI (174 aa). The region spanning 2399 to 2476 is the Carrier 1 domain; sequence EAREIIEESL…EMVAAAQEKL (78 aa). Ser-2436 carries the O-(pantetheine 4'-phosphoryl)serine modification. Positions 2515-2601 are disordered; that stretch reads EKAEYADFDD…FDSDSDNASI (87 aa). Residues 2520–2532 are compositionally biased toward acidic residues; sequence ADFDDENEEEGIP. The segment at 2629–3061 is condensation; that stretch reads RTLPMSFGQT…ISRPSLYDPQ (433 aa). An adenylation region spans residues 3089 to 3486; it reads EIVKAHGSKV…EDGHLVLEGR (398 aa). In terms of domain architecture, Carrier 2 spans 3607–3684; that stretch reads RDSTEKLKDI…AMARMVDPTA (78 aa). An O-(pantetheine 4'-phosphoryl)serine modification is found at Ser-3644. Residues 3750–3971 form a reductase-like domain region; it reads ITGATGFLGK…DFVDVEKVAT (222 aa).

It in the C-terminal section; belongs to the NRP synthetase family.

It participates in mycotoxin biosynthesis. In terms of biological role, hybrid PKS-NRPS synthetase; part of the gene cluster that mediates the biosynthesis of the cytotoxic leucine-containing cytochalasans, including aspochalasin C, aspochalasin E, TMC-169, flavichalasine F, aspergillin PZ, aspochalasin M and flavichalasine G. The first step in the pathway is catalyzed by the hybrid PKS-NRPS ffsA that utilizes 8 units of malonyl-CoA to iteratively assemble the octaketide chain before addition of L-leucine by the C-terminal NRPS modules. Because ffsA lacks a designated enoylreductase (ER) domain, the required activity is provided the enoyl reductase fssC. The methyltransferase (MT) domain of ffsA catalyzes the alpha-methylation at C10 and C14 using S-adenosyl-L-methionine as the methyl-donating cosubstrate. Reduction by the hydrolyase ffsE, followed by dehydration and intra-molecular Diels-Alder cyclization by the Diels-Alderase ffsF then yield the required isoindolone-fused macrocycle. A number of oxidative steps catalyzed by the tailoring cytochrome P450 monooxygenase ffsD, the FAD-linked oxidoreductase ffsJ and the short-chain dehydrogenase/reductase ffsI, are further required to afford the final products. The chain is Polyketide synthase-nonribosomal peptide synthetase ffsA from Aspergillus flavipes.